The primary structure comprises 339 residues: Senescence-specific cysteine protease SAG39 (339 aa).

A signal peptide spans 1–23 (MAMAKALLFAILGCLCLCSAVLA). Disulfide bonds link cysteine 144–cysteine 187, cysteine 178–cysteine 220, and cysteine 276–cysteine 328. The active site involves cysteine 147. Active-site residues include histidine 282 and asparagine 303.

The protein belongs to the peptidase C1 family. Low expression in mature leaves.

The protein localises to the vacuole. Cysteine protease that may have a developmental senescence specific cell death function during apoptosis, heavy metal detoxification, and hypersensitive response. In Oryza sativa subsp. japonica (Rice), this protein is Senescence-specific cysteine protease SAG39.